The chain runs to 103 residues: Large ribosomal subunit protein bL21 (103 aa).

The protein belongs to the bacterial ribosomal protein bL21 family. In terms of assembly, part of the 50S ribosomal subunit. Contacts protein L20.

This protein binds to 23S rRNA in the presence of protein L20. This Sodalis glossinidius (strain morsitans) protein is Large ribosomal subunit protein bL21.